Consider the following 345-residue polypeptide: MSHQTGIRANEQLAKVLGKAKNGKLRVVKVSIENEQLSCSATADVKKDWERDYDKLLGPLLEETVPCYILYRLDAKIPLGHSWLLISWIPDTASIRQKMVYASTKATLKTEFGSAYITEELHATTLEETTLEGYRKHKRDFAAPAPLTTREEELKELRKTEVHTEISTNTRHQTLGGISCPLTDATVAAVQDLVRGNYDYLQFRIDLEEERIHVSHAAQVELSALPKQVPEDHARYHLFLFRHTHEGDYQESYVFVYSMPGYTCSVRERMMYSSCKAPFLEQLAALGVDVVKKLEIDNGNELTEAYLLDELHPKKILHRPAFAKPKGPPNRGAKRLTRPSNEDQV.

ADF-H domains follow at residues glutamine 4–arginine 139 and glycine 177–histidine 312. The segment at proline 320 to valine 345 is disordered.

Belongs to the actin-binding proteins ADF family. Twinfilin subfamily. In terms of assembly, interacts with G-actin; ADP-actin form.

Its subcellular location is the cytoplasm. It localises to the cytoskeleton. The protein resides in the cell cortex. In terms of biological role, actin-binding protein involved in motile and morphological processes. Inhibits actin polymerization, likely by sequestering G-actin. This chain is Twinfilin (twf), found in Drosophila pseudoobscura pseudoobscura (Fruit fly).